Reading from the N-terminus, the 391-residue chain is 1-deoxy-D-xylulose 5-phosphate reductoisomerase (391 aa).

Residues T17, G18, S19, I20, N47, and N130 each contribute to the NADPH site. A 1-deoxy-D-xylulose 5-phosphate-binding site is contributed by K131. NADPH is bound at residue E132. D156 lines the Mn(2+) pocket. Residues S157, E158, S182, and H205 each contribute to the 1-deoxy-D-xylulose 5-phosphate site. E158 contributes to the Mn(2+) binding site. Residue G211 coordinates NADPH. Residues S218, N223, K224, and E227 each contribute to the 1-deoxy-D-xylulose 5-phosphate site. Position 227 (E227) interacts with Mn(2+).

The protein belongs to the DXR family. Mg(2+) is required as a cofactor. It depends on Mn(2+) as a cofactor.

It carries out the reaction 2-C-methyl-D-erythritol 4-phosphate + NADP(+) = 1-deoxy-D-xylulose 5-phosphate + NADPH + H(+). It participates in isoprenoid biosynthesis; isopentenyl diphosphate biosynthesis via DXP pathway; isopentenyl diphosphate from 1-deoxy-D-xylulose 5-phosphate: step 1/6. Catalyzes the NADPH-dependent rearrangement and reduction of 1-deoxy-D-xylulose-5-phosphate (DXP) to 2-C-methyl-D-erythritol 4-phosphate (MEP). This is 1-deoxy-D-xylulose 5-phosphate reductoisomerase from Sinorhizobium medicae (strain WSM419) (Ensifer medicae).